The sequence spans 983 residues: Protein translocase subunit SecA (983 aa).

Residues glutamine 83, 101–105 (GEGKT), and aspartate 489 each bind ATP. Positions 948-983 (ISSEEEDNNEKTNINNNEDLERTKGEAQQTAKNPNE) are disordered. Over residues 973 to 983 (EAQQTAKNPNE) the composition is skewed to polar residues.

The protein belongs to the SecA family. In terms of assembly, monomer and homodimer. Part of the essential Sec protein translocation apparatus which comprises SecA, SecYEG and auxiliary proteins SecDF. Other proteins may also be involved.

It localises to the cell membrane. Its subcellular location is the cytoplasm. It carries out the reaction ATP + H2O + cellular proteinSide 1 = ADP + phosphate + cellular proteinSide 2.. In terms of biological role, part of the Sec protein translocase complex. Interacts with the SecYEG preprotein conducting channel. Has a central role in coupling the hydrolysis of ATP to the transfer of proteins into and across the cell membrane, serving as an ATP-driven molecular motor driving the stepwise translocation of polypeptide chains across the membrane. The sequence is that of Protein translocase subunit SecA from Mesomycoplasma hyopneumoniae (strain 232) (Mycoplasma hyopneumoniae).